We begin with the raw amino-acid sequence, 204 residues long: Proteasome subunit beta type-3 (204 aa).

This sequence belongs to the peptidase T1B family. As to quaternary structure, the 26S proteasome consists of a 20S proteasome core and two 19S regulatory subunits. The 20S proteasome core is composed of 28 subunits that are arranged in four stacked rings, resulting in a barrel-shaped structure. The two end rings are each formed by seven alpha subunits, and the two central rings are each formed by seven beta subunits. The catalytic chamber with the active sites is on the inside of the barrel.

It localises to the cytoplasm. Its subcellular location is the nucleus. Functionally, non-catalytic component of the proteasome, a multicatalytic proteinase complex which is characterized by its ability to cleave peptides with Arg, Phe, Tyr, Leu, and Glu adjacent to the leaving group at neutral or slightly basic pH. The proteasome has an ATP-dependent proteolytic activity. The chain is Proteasome subunit beta type-3 (PBC1) from Picea mariana (Black spruce).